A 232-amino-acid chain; its full sequence is Large ribosomal subunit protein uL1 (232 aa).

The protein belongs to the universal ribosomal protein uL1 family. In terms of assembly, part of the 50S ribosomal subunit.

Binds directly to 23S rRNA. The L1 stalk is quite mobile in the ribosome, and is involved in E site tRNA release. Its function is as follows. Protein L1 is also a translational repressor protein, it controls the translation of the L11 operon by binding to its mRNA. In Aromatoleum aromaticum (strain DSM 19018 / LMG 30748 / EbN1) (Azoarcus sp. (strain EbN1)), this protein is Large ribosomal subunit protein uL1.